Here is a 633-residue protein sequence, read N- to C-terminus: UvrABC system protein C (633 aa).

Positions 37-115 (PKPGVYRMFG…IKSLKPRFNI (79 aa)) constitute a GIY-YIG domain. Positions 225–260 (NALREDLQTRMAQASEAMDFETAAKLRDRIRAIAAV) constitute a UVR domain.

This sequence belongs to the UvrC family. In terms of assembly, interacts with UvrB in an incision complex.

The protein localises to the cytoplasm. In terms of biological role, the UvrABC repair system catalyzes the recognition and processing of DNA lesions. UvrC both incises the 5' and 3' sides of the lesion. The N-terminal half is responsible for the 3' incision and the C-terminal half is responsible for the 5' incision. The chain is UvrABC system protein C from Maricaulis maris (strain MCS10) (Caulobacter maris).